A 598-amino-acid polypeptide reads, in one-letter code: Phospholipase B-like protein G (598 aa).

A signal peptide spans methionine 1–cysteine 24. Residues asparagine 50, asparagine 98, asparagine 173, asparagine 341, asparagine 368, asparagine 450, asparagine 480, asparagine 526, and asparagine 576 are each glycosylated (N-linked (GlcNAc...) asparagine).

The protein belongs to the phospholipase B-like family.

Its subcellular location is the secreted. Probable phospholipase. The protein is Phospholipase B-like protein G (plbG) of Dictyostelium discoideum (Social amoeba).